A 463-amino-acid polypeptide reads, in one-letter code: Glutamate--tRNA ligase 2 (463 aa).

The 'HIGH' region motif lies at 10-20; the sequence is PSPTGYLHIGG. The short motif at 238–242 is the 'KMSKS' region element; sequence KLSKR. Lys-241 contributes to the ATP binding site.

The protein belongs to the class-I aminoacyl-tRNA synthetase family. Glutamate--tRNA ligase type 1 subfamily. As to quaternary structure, monomer.

It is found in the cytoplasm. The catalysed reaction is tRNA(Glu) + L-glutamate + ATP = L-glutamyl-tRNA(Glu) + AMP + diphosphate. Its function is as follows. Catalyzes the attachment of glutamate to tRNA(Glu) in a two-step reaction: glutamate is first activated by ATP to form Glu-AMP and then transferred to the acceptor end of tRNA(Glu). The polypeptide is Glutamate--tRNA ligase 2 (Helicobacter acinonychis (strain Sheeba)).